The primary structure comprises 214 residues: uncharacterized protein (214 aa).

This is an uncharacterized protein from Sinorhizobium fredii (strain NBRC 101917 / NGR234).